An 811-amino-acid chain; its full sequence is Leucine--tRNA ligase (811 aa).

Residues 38–49 carry the 'HIGH' region motif; it reads SYPSGSNLHAGH. A 'KMSKS' region motif is present at residues 570-574; it reads KMSKS. Lys573 is an ATP binding site.

This sequence belongs to the class-I aminoacyl-tRNA synthetase family.

It localises to the cytoplasm. It carries out the reaction tRNA(Leu) + L-leucine + ATP = L-leucyl-tRNA(Leu) + AMP + diphosphate. This is Leucine--tRNA ligase from Clostridium kluyveri (strain ATCC 8527 / DSM 555 / NBRC 12016 / NCIMB 10680 / K1).